The following is a 115-amino-acid chain: UPF0102 protein NMA0341 (115 aa).

This sequence belongs to the UPF0102 family.

This chain is UPF0102 protein NMA0341, found in Neisseria meningitidis serogroup A / serotype 4A (strain DSM 15465 / Z2491).